Consider the following 666-residue polypeptide: Protein-arginine deiminase type-4 (666 aa).

Positions 153, 155, 165, 168, 176, and 179 each coordinate Ca(2+). Arg212 and Arg218 each carry citrulline. Gln349 is a Ca(2+) binding site. Asp350 is a catalytic residue. The Ca(2+) site is built by Glu351, Glu353, Asp369, and Ser370. Residues Arg372, Arg374, and Arg383 each carry the citrulline modification. Arg374 lines the substrate pocket. The Ca(2+) site is built by Phe407, Leu410, and Glu411. Catalysis depends on residues His471, Asp473, and Cys648.

The protein belongs to the protein arginine deiminase family. Requires Ca(2+) as cofactor. In terms of processing, autocitrullination at Arg-372 and Arg-374 inactivates the enzyme. As to expression, expressed in pluripotent embryonic stem and induced pluripotent stem cells but not multipotent neural stem cells.

It is found in the cytoplasm. Its subcellular location is the nucleus. The protein resides in the cytoplasmic granule. The catalysed reaction is L-arginyl-[protein] + H2O = L-citrullyl-[protein] + NH4(+). Its activity is regulated as follows. Strongly Inhibited by F-amidine and N-alpha-benzoyl-N5-(2-chloro-1-iminoethyl)-L-ornithine amide (Cl-amidine). These inhibitors are however not specific to PADI4 and also inhibit other members of the family. Catalyzes the citrullination/deimination of arginine residues of proteins such as histones, thereby playing a key role in histone code and regulation of stem cell maintenance. Citrullinates histone H1 at 'Arg-54' (to form H1R54ci), histone H3 at 'Arg-2', 'Arg-8', 'Arg-17' and/or 'Arg-26' (to form H3R2ci, H3R8ci, H3R17ci, H3R26ci, respectively) and histone H4 at 'Arg-3' (to form H4R3ci). Acts as a key regulator of stem cell maintenance by mediating citrullination of histone H1: citrullination of 'Arg-54' of histone H1 (H1R54ci) results in H1 displacement from chromatin and global chromatin decondensation, thereby promoting pluripotency and stem cell maintenance. Promotes profound chromatin decondensation during the innate immune response to infection in neutrophils by mediating formation of H1R54ci. Required for the formation of neutrophil extracellular traps (NETs); NETs are mainly composed of DNA fibers and are released by neutrophils to bind pathogens during inflammation. Citrullination of histone H3 prevents their methylation by CARM1 and HRMT1L2/PRMT1 and represses transcription. Citrullinates EP300/P300 at 'Arg-2142', which favors its interaction with NCOA2/GRIP1. This chain is Protein-arginine deiminase type-4 (Padi4), found in Mus musculus (Mouse).